We begin with the raw amino-acid sequence, 529 residues long: Ectonucleoside triphosphate diphosphohydrolase 3 (529 aa).

The Cytoplasmic segment spans residues 1–22 (MFTVMTRQPCEQAGFRALSRTP). A helical transmembrane segment spans residues 23–43 (AIVTLVVLLVSIVVLVTLTLI). Residues 44–485 (QIRHPQVLPP…PLIHLPIQPP (442 aa)) lie on the Extracellular side of the membrane. Asn81 carries N-linked (GlcNAc...) asparagine glycosylation. A disulfide bridge links Cys92 with Cys116. Asn149 carries N-linked (GlcNAc...) asparagine glycosylation. The active-site Proton acceptor is Glu182. An ATP-binding site is contributed by 222 to 226 (GASTQ). Asn238, Asn284, and Asn318 each carry an N-linked (GlcNAc...) asparagine glycan. 3 disulfides stabilise this stretch: Cys261/Cys308, Cys289/Cys334, and Cys347/Cys353. 2 N-linked (GlcNAc...) asparagine glycosylation sites follow: Asn381 and Asn392. Residues Cys399 and Cys422 are joined by a disulfide bond. Asn454 carries an N-linked (GlcNAc...) asparagine glycan. Residues 486–506 (VFMGVLAFFTAIALLCLAFLL) traverse the membrane as a helical segment. Residues 507–529 (YLCSSFRTKERSENAFDQAVDSD) lie on the Cytoplasmic side of the membrane.

This sequence belongs to the GDA1/CD39 NTPase family. It depends on Ca(2+) as a cofactor. Requires Mg(2+) as cofactor.

The protein localises to the cell membrane. The catalysed reaction is a ribonucleoside 5'-triphosphate + 2 H2O = a ribonucleoside 5'-phosphate + 2 phosphate + 2 H(+). Its function is as follows. Catalyzes the hydrolysis of nucleoside triphosphates and diphosphates. Has a threefold preference for the hydrolysis of ATP and UTP over ADP and UDP. In Mus musculus (Mouse), this protein is Ectonucleoside triphosphate diphosphohydrolase 3.